The sequence spans 189 residues: GTP cyclohydrolase 1 (189 aa).

Cysteine 79, histidine 82, and cysteine 150 together coordinate Zn(2+).

It belongs to the GTP cyclohydrolase I family. Homomer.

It catalyses the reaction GTP + H2O = 7,8-dihydroneopterin 3'-triphosphate + formate + H(+). It functions in the pathway cofactor biosynthesis; 7,8-dihydroneopterin triphosphate biosynthesis; 7,8-dihydroneopterin triphosphate from GTP: step 1/1. This is GTP cyclohydrolase 1 from Rickettsia rickettsii (strain Iowa).